The sequence spans 829 residues: pre-rRNA 2'-O-ribose RNA methyltransferase FTSJ3 (829 aa).

5 residues coordinate S-adenosyl-L-methionine: Gly56, Trp58, Asp76, Asp92, and Asp117. Residue Lys157 is the Proton acceptor of the active site. Residues 332–367 are disordered; that stretch reads ISLSSEEEGDEEESAAETKQASEEEEEREEEEQLNR. Phosphoserine occurs at positions 333, 335, 336, 345, and 353. Acidic residues predominate over residues 336–346; that stretch reads SEEEGDEEESA. The span at 354–363 shows a compositional bias: acidic residues; the sequence is EEEEEREEEE. Arg389 is subject to Citrulline. 2 disordered regions span residues 443 to 508 and 528 to 634; these read FLSD…PLLV and DGFS…GFEV. Residues 456 to 473 are compositionally biased toward acidic residues; it reads DAEDDDDTSLESDLDPEE. Phosphoserine occurs at positions 531 and 544. Lys570 participates in a covalent cross-link: Glycyl lysine isopeptide (Lys-Gly) (interchain with G-Cter in SUMO2). Ser575 carries the post-translational modification Phosphoserine. Glycyl lysine isopeptide (Lys-Gly) (interchain with G-Cter in SUMO2) cross-links involve residues Lys626 and Lys642. Ser659 is subject to Phosphoserine. Residue Lys661 forms a Glycyl lysine isopeptide (Lys-Gly) (interchain with G-Cter in SUMO2) linkage. Ser671 bears the Phosphoserine mark. A Glycyl lysine isopeptide (Lys-Gly) (interchain with G-Cter in SUMO2) cross-link involves residue Lys693. Residues 722–760 adopt a coiled-coil conformation; that stretch reads IKKVAEAKARKKRRMLKKLEQTKKKAEAVVNTVDISERE. Arg766 carries the post-translational modification Citrulline. Residues 794–804 show a composition bias toward basic residues; it reads VRRPAGVRGHF. The segment at 794-829 is disordered; that stretch reads VRRPAGVRGHFKVVDSRMKKDQRAQRKEQKRNHRRK. Basic and acidic residues predominate over residues 805 to 820; it reads KVVDSRMKKDQRAQRK.

This sequence belongs to the class I-like SAM-binding methyltransferase superfamily. RNA methyltransferase RlmE family. SPB1 subfamily. As to quaternary structure, interacts with NIP7. In terms of processing, citrullinated by PADI4.

It localises to the nucleus. Its subcellular location is the nucleolus. It carries out the reaction a ribonucleotide in rRNA + S-adenosyl-L-methionine = a 2'-O-methylribonucleotide in rRNA + S-adenosyl-L-homocysteine + H(+). Functionally, RNA 2'-O-methyltransferase involved in the processing of the 34S pre-rRNA to 18S rRNA and in 40S ribosomal subunit formation. The polypeptide is pre-rRNA 2'-O-ribose RNA methyltransferase FTSJ3 (Ftsj3) (Rattus norvegicus (Rat)).